A 440-amino-acid chain; its full sequence is Chromosome partition protein MukF (440 aa).

The leucine-zipper stretch occupies residues 208–236; that stretch reads LSETSGTLRELQDTLEAAGDKLQANLLRI.

Belongs to the MukF family. As to quaternary structure, interacts, and probably forms a ternary complex, with MukE and MukB via its C-terminal region. The complex formation is stimulated by calcium or magnesium. It is required for an interaction between MukE and MukB.

The protein resides in the cytoplasm. It localises to the nucleoid. Functionally, involved in chromosome condensation, segregation and cell cycle progression. May participate in facilitating chromosome segregation by condensation DNA from both sides of a centrally located replisome during cell division. Not required for mini-F plasmid partitioning. Probably acts via its interaction with MukB and MukE. Overexpression results in anucleate cells. It has a calcium binding activity. The chain is Chromosome partition protein MukF from Salmonella agona (strain SL483).